Consider the following 141-residue polypeptide: MVKRFFESYHEVPDGTQCHRKTYITTALGGICGIIGSAYRVSLNPADSTLEAVARVGRYTFTAAAIGAMFGLTTCVSAQVREKPDDPLNYFIGGCAGGLTLGARTHSYGTAAMGCVYMGTAAALFKIGKLEGWELFPTPKV.

2 consecutive transmembrane segments (helical) span residues 21-43 (KTYITTALGGICGIIGSAYRVSL) and 58-80 (RYTFTAAAIGAMFGLTTCVSAQV).

It belongs to the complex I NDUFA11 subunit family. As to quaternary structure, complex I is composed of 45 different subunits.

The protein resides in the mitochondrion inner membrane. Functionally, accessory subunit of the mitochondrial membrane respiratory chain NADH dehydrogenase (Complex I), that is believed not to be involved in catalysis. Complex I functions in the transfer of electrons from NADH to the respiratory chain. The immediate electron acceptor for the enzyme is believed to be ubiquinone. The polypeptide is NADH dehydrogenase [ubiquinone] 1 alpha subcomplex subunit 11 (Ndufa11) (Mus musculus (Mouse)).